The primary structure comprises 667 residues: MSKQQAPNTTGIGTADLQWHSDETPYSPRFDDIYYAPTHGAEESTHVFLEGINAPACWQQRPHYTLAETGFGTGLNFLLTLDLWLATAPAHGRLHYIAVEAYPMDQAALARAHAPFAWLAPHSAALVQAWPPAVAGFHQRSLAQGRVTLTLLFGPAASMLAQLSATVDGWYLDGFAPSRNPEMWSDTLFAQLSRLSRLGTRLASFTVAGTVKRGLRAQGFTLHKAPGFGQKRECLRGVLENPLPHKPNIPPWYAPPQRSEPVSSVAIIGAGIAGAACAYACRRAGLQVTLFERHAQPGAEASGNPSGLFSPRLTAGVSLDGRFHAAAYFHALDLYAQLAQHTPEIYHPGRGLLQMAESEADVQRLQQALFHSAWPPQHAQWWDAATASQQLGTPLPRGGLWHAQAGALNPSVLCAALLADVTAHYQTEIVRLAPQPEGWTLHTAQRHYGTFDAVVIAAGATAPLLYPEAEIPNTAVQGQLSILPAANPLNQHALVFGGYLTPPYQDEQGQLCQVLGSTYRPWDDLSDCSWSECQPEAHQLVWQQLNETLPQLGQQWLGPARQGRAALRAAMKDHFPLFGPLINPSAYRTNYATLYQGKRVSLAKPAVYIDGLYLIGGLGSRGLLTAPLFGACMAALLSGGPLPLEADLWCAVHPARLLVRSLKKPPL.

The span at 1-12 (MSKQQAPNTTGI) shows a compositional bias: polar residues. The tract at residues 1 to 20 (MSKQQAPNTTGIGTADLQWH) is disordered. The segment at 1-240 (MSKQQAPNTT…KRECLRGVLE (240 aa)) is tRNA (mnm(5)s(2)U34)-methyltransferase. The interval 268–667 (IGAGIAGAAC…LVRSLKKPPL (400 aa)) is FAD-dependent cmnm(5)s(2)U34 oxidoreductase.

In the N-terminal section; belongs to the methyltransferase superfamily. tRNA (mnm(5)s(2)U34)-methyltransferase family. This sequence in the C-terminal section; belongs to the DAO family. FAD is required as a cofactor.

Its subcellular location is the cytoplasm. The catalysed reaction is 5-aminomethyl-2-thiouridine(34) in tRNA + S-adenosyl-L-methionine = 5-methylaminomethyl-2-thiouridine(34) in tRNA + S-adenosyl-L-homocysteine + H(+). Functionally, catalyzes the last two steps in the biosynthesis of 5-methylaminomethyl-2-thiouridine (mnm(5)s(2)U) at the wobble position (U34) in tRNA. Catalyzes the FAD-dependent demodification of cmnm(5)s(2)U34 to nm(5)s(2)U34, followed by the transfer of a methyl group from S-adenosyl-L-methionine to nm(5)s(2)U34, to form mnm(5)s(2)U34. This chain is tRNA 5-methylaminomethyl-2-thiouridine biosynthesis bifunctional protein MnmC, found in Magnetococcus marinus (strain ATCC BAA-1437 / JCM 17883 / MC-1).